The primary structure comprises 528 residues: Inositol-3-phosphate synthase (528 aa).

The NAD(+) site is built by Gly66, Gly67, Asn68, Asn69, Asp140, Gln187, Arg190, Thr228, Ala229, Asn230, Thr231, Gly279, Asp304, Ser307, Asn338, Asn339, Asp340, Lys353, Gly392, Asp393, Asp421, and Ser422.

Belongs to the myo-inositol 1-phosphate synthase family. NAD(+) is required as a cofactor.

The protein localises to the cytoplasm. It is found in the cytosol. The enzyme catalyses D-glucose 6-phosphate = 1D-myo-inositol 3-phosphate. Its pathway is polyol metabolism; myo-inositol biosynthesis; myo-inositol from D-glucose 6-phosphate: step 1/2. Activated by ammonium ions. In terms of biological role, key enzyme in myo-inositol biosynthesis pathway that catalyzes the conversion of glucose 6-phosphate to 1-myo-inositol 1-phosphate in a NAD-dependent manner. Rate-limiting enzyme in the synthesis of all inositol-containing compounds. De novo-synthesized myo-inositol is essential for incorporation into GPI (glycosylphosphatidylinositol) glycolipids in the bloodstream form. This chain is Inositol-3-phosphate synthase, found in Trypanosoma brucei brucei.